Consider the following 534-residue polypeptide: MVFFKDLFIFKSLIKGSLYSGHMKKKLLNYLPLFALMLFTVSMMAQTAPDEDTNSSIACPSSGVFQNNTTRDVDIANPDNVGTVDDRTCYADYYETSVYGETWGAYNITFNSNHWDAPNTLQPRIERSLSRSQETGVGSYARFTGTLRILEVGNTGTFGSTGSYLMQAKGKHTGGGGSNDPAICLYLARPVYGPDANGNQVQVSFDIWREQINFRGGSGAAGRTEVFLRNVLKDEIIDIELEVGFRQDPNDPNLKIHYSDAIIGGQVFNWNIPEPERGRESGIRYGVYRVKGGRAQMRWANTTYQKVEVVDNSTIPAADIYRIKNVETGEYLTSSGSSIIASTSGTGSDKEWEIISAGSGSSYVNIDSQVRGIIRFTGGSSNPGLVSTNFSPPNTDTDKVWTVIDNNDGTVSFETRNLGRFLYHDTNNMITHSANIDDRSKWNLESTTLSVDSQQIASVGVYPNPTVDGFTISLDNISAEKVQIFNLLGMLVYEQKTNESSIHIDNMDNFDSGMYIISVTANDNKVYQTKLIVN.

A signal peptide spans 1–47 (MVFFKDLFIFKSLIKGSLYSGHMKKKLLNYLPLFALMLFTVSMMAQT). Cysteines 59 and 89 form a disulfide. Ca(2+) is bound by residues Gly63, Asn68, Asp86, Thr88, Ala91, and Asp92. Tyr164 serves as a coordination point for substrate. Lys169 (proton acceptor) is an active-site residue. Residues 218–223 (SGAAGR) and 288–291 (YRVK) each bind substrate. Tyr288 serves as the catalytic Proton donor/acceptor. The interval 316–449 (PAADIYRIKN…SKWNLESTTL (134 aa)) is ulvan-binding domain. A propeptide spans 450–534 (SVDSQQIASV…KVYQTKLIVN (85 aa)) (removed by the type IX secretion system (T9SS)).

It belongs to the polysaccharide lyase 28 family. Requires Ca(2+) as cofactor.

Its subcellular location is the secreted. Ulvan lyase involved in ulvan degradation. Ulvan is the main polysaccharide component of the Ulvales (green seaweed) cell wall. It is composed of disaccharide building blocks comprising 3-sulfated rhamnose (Rha3S) linked to D-glucuronic acid (GlcA), L-iduronic acid (IduA), or D-xylose (Xyl). Ulvan lyase catalyzes the endolytic cleavage of the glycosidic bond between Rha3S and the uronic acids GlcA or IduA, producing oligosaccharides that have unsaturated 4-deoxy-L-threo-hex-4-enopyranosiduronic acid (deltaUA) at the non-reducing end. This results eventually in the degradation of the ulvan polysaccharide into deltaUA-Rha3S disaccharides and deltaUA-Rha3S-Xyl-Rha3S tetrasaccharides. In Nonlabens ulvanivorans (Persicivirga ulvanivorans), this protein is Ulvan lyase NLR42.